The chain runs to 146 residues: Ribonuclease H (146 aa).

The region spanning 1–141 is the RNase H type-1 domain; it reads MKHVDIFTDG…ADELARKGME (141 aa). Residues Asp9, Glu47, Asp69, and Asp133 each coordinate Mg(2+). Positions 123–146 are disordered; the sequence is HAGHPENERADELARKGMEPFKRR. Over residues 125–146 the composition is skewed to basic and acidic residues; that stretch reads GHPENERADELARKGMEPFKRR.

Belongs to the RNase H family. As to quaternary structure, monomer. Requires Mg(2+) as cofactor.

Its subcellular location is the cytoplasm. The catalysed reaction is Endonucleolytic cleavage to 5'-phosphomonoester.. In terms of biological role, endonuclease that specifically degrades the RNA of RNA-DNA hybrids. The chain is Ribonuclease H from Agrobacterium fabrum (strain C58 / ATCC 33970) (Agrobacterium tumefaciens (strain C58)).